Consider the following 957-residue polypeptide: Glycine dehydrogenase (decarboxylating) (957 aa).

Residue Lys-708 is modified to N6-(pyridoxal phosphate)lysine.

Belongs to the GcvP family. As to quaternary structure, the glycine cleavage system is composed of four proteins: P, T, L and H. Requires pyridoxal 5'-phosphate as cofactor.

The enzyme catalyses N(6)-[(R)-lipoyl]-L-lysyl-[glycine-cleavage complex H protein] + glycine + H(+) = N(6)-[(R)-S(8)-aminomethyldihydrolipoyl]-L-lysyl-[glycine-cleavage complex H protein] + CO2. In terms of biological role, the glycine cleavage system catalyzes the degradation of glycine. The P protein binds the alpha-amino group of glycine through its pyridoxal phosphate cofactor; CO(2) is released and the remaining methylamine moiety is then transferred to the lipoamide cofactor of the H protein. This Shigella boydii serotype 18 (strain CDC 3083-94 / BS512) protein is Glycine dehydrogenase (decarboxylating).